Here is a 475-residue protein sequence, read N- to C-terminus: MKKTTAFLLCFLMIFTALLPMQNANAYDASLIPNLQIPQKNIPNNDGMNFVKGLRLGWNLGNTFDAFNGTNITNELDYETSWSGIKTTKQMIDAIKQKGFNTVRIPVSWHPHVSGSDYKISDVWMNRVQEVVNYCIDNKMYVILNTHHDVDKVKGYFPSSQYMASSKKYITSVWAQIAARFANYDEHLIFEGMNEPRLVGHANEWWPELTNSDVVDSINCINQLNQDFVNTVRATGGKNASRYLMCPGYVASPDGATNDYFRMPNDISGNNNKIIVSVHAYCPWNFAGLAMADGGTNAWNINDSKDQSEVTWFMDNIYNKYTSRGIPVIIGECGAVDKNNLKTRVEYMSYYVAQAKARGILCILWDNNNFSGTGELFGFFDRRSCQFKFPEIIDGMVKYAFEAKTDPDPVIVYGDYNNDGNVDALDFAGLKKYIMAADHAYVKNLDVNLDNEVNAFDLAILKKYLLGMVSKLPSN.

Positions 1 to 26 are cleaved as a signal peptide; sequence MKKTTAFLLCFLMIFTALLPMQNANA. Residue His-147 is part of the active site. Glu-195 (proton donor) is an active-site residue. The active-site Nucleophile is Glu-332. Residues 409-474 form the Dockerin domain; sequence PVIVYGDYNN…LLGMVSKLPS (66 aa).

The protein belongs to the glycosyl hydrolase 5 (cellulase A) family.

The enzyme catalyses Endohydrolysis of (1-&gt;4)-beta-D-glucosidic linkages in cellulose, lichenin and cereal beta-D-glucans.. The biological conversion of cellulose to glucose generally requires three types of hydrolytic enzymes: (1) Endoglucanases which cut internal beta-1,4-glucosidic bonds; (2) Exocellobiohydrolases that cut the disaccharide cellobiose from the non-reducing end of the cellulose polymer chain; (3) Beta-1,4-glucosidases which hydrolyze the cellobiose and other short cello-oligosaccharides to glucose. In Ruminiclostridium cellulolyticum (strain ATCC 35319 / DSM 5812 / JCM 6584 / H10) (Clostridium cellulolyticum), this protein is Endoglucanase A (celCCA).